The primary structure comprises 178 residues: ATP-dependent protease subunit HslV (178 aa).

Threonine 2 is a catalytic residue. Residues serine 159, cysteine 162, and threonine 165 each contribute to the Na(+) site.

It belongs to the peptidase T1B family. HslV subfamily. A double ring-shaped homohexamer of HslV is capped on each side by a ring-shaped HslU homohexamer. The assembly of the HslU/HslV complex is dependent on binding of ATP.

It localises to the cytoplasm. The enzyme catalyses ATP-dependent cleavage of peptide bonds with broad specificity.. Its activity is regulated as follows. Allosterically activated by HslU binding. Functionally, protease subunit of a proteasome-like degradation complex believed to be a general protein degrading machinery. The chain is ATP-dependent protease subunit HslV from Buchnera aphidicola subsp. Cinara cedri (strain Cc).